Consider the following 226-residue polypeptide: Cytidylate kinase (226 aa).

An ATP-binding site is contributed by 10 to 18; the sequence is GPASSGKST.

The protein belongs to the cytidylate kinase family. Type 1 subfamily.

The protein localises to the cytoplasm. It carries out the reaction CMP + ATP = CDP + ADP. The enzyme catalyses dCMP + ATP = dCDP + ADP. This Streptococcus pyogenes serotype M28 (strain MGAS6180) protein is Cytidylate kinase.